The sequence spans 94 residues: Co-chaperonin GroES (94 aa).

It belongs to the GroES chaperonin family. Heptamer of 7 subunits arranged in a ring. Interacts with the chaperonin GroEL.

It is found in the cytoplasm. Its function is as follows. Together with the chaperonin GroEL, plays an essential role in assisting protein folding. The GroEL-GroES system forms a nano-cage that allows encapsulation of the non-native substrate proteins and provides a physical environment optimized to promote and accelerate protein folding. GroES binds to the apical surface of the GroEL ring, thereby capping the opening of the GroEL channel. The chain is Co-chaperonin GroES from Lactiplantibacillus plantarum (strain ATCC BAA-793 / NCIMB 8826 / WCFS1) (Lactobacillus plantarum).